Reading from the N-terminus, the 462-residue chain is Transcription initiation factor TFIID subunit 7-like (462 aa).

Disordered stretches follow at residues 1–97 (MECP…VPDE) and 327–366 (DSRS…SEEY). Composition is skewed to low complexity over residues 16–30 (STPT…SQQE) and 66–77 (DADSSAQAAAQA). The span at 333-365 (DDDEDEDDEDEDEDEDEDEDEDKEEEEEDCSEE) shows a compositional bias: acidic residues. Positions 342–462 (DEDEDEDEDE…QEQLQRFLKK (121 aa)) form a coiled coil.

This sequence belongs to the TAF7 family. As to quaternary structure, TFIID is composed of TATA binding protein (TBP) and a number of TBP-associated factors (TAFs). TAF7L may replace TAF7 in a spermatogenesis-specific form of TFIID. Interacts with TBP; the interaction occurs in a sub-population of cells (pachytene and haploid round spermatids) and is developmentally regulated through differential intracellular localization of the two proteins. Interacts with TAF1. In terms of tissue distribution, testis-specific.

The protein resides in the nucleus. It localises to the cytoplasm. Functionally, probably functions as a spermatogenesis-specific component of the DNA-binding general transcription factor complex TFIID, a multimeric protein complex that plays a central role in mediating promoter responses to various activators and repressors. May play a role in spermatogenesis. In Homo sapiens (Human), this protein is Transcription initiation factor TFIID subunit 7-like (TAF7L).